The chain runs to 395 residues: Nitrite extrusion protein (395 aa).

12 helical membrane-spanning segments follow: residues 15–35, 44–64, 73–93, 96–116, 133–153, 160–180, 203–223, 240–262, 271–291, 293–313, 330–350, and 357–377; these read SLVA…QITL, ISLV…PLGY, LMFM…SIAD, FDLI…SIGV, GIYG…PVIA, STVQ…VLFG, VLWF…AFTI, AGLR…GFLA, LMFV…SPTI, LYTF…GTVF, IVSA…ASVF, and AIGF…VIWM.

Belongs to the major facilitator superfamily. Nitrate/nitrite porter (TC 2.A.1.8) family.

The protein localises to the cell membrane. In terms of biological role, involved in excretion of nitrite produced by the dissimilatory reduction of nitrate. The protein is Nitrite extrusion protein (narK) of Bacillus subtilis (strain 168).